The primary structure comprises 722 residues: Dynein axonemal intermediate chain 7 (722 aa).

Residues 1–15 show a composition bias toward basic residues; it reads MGPKAKKSGSKKKKV. The interval 1-20 is disordered; that stretch reads MGPKAKKSGSKKKKVTKAER.

Belongs to the DNAI7 family. Part of the multisubunit axonemal dynein complex formed at least of two heavy chains and a number of intermediate and light chains. Associates with tubulin. Interacts with microtubule. In terms of processing, ubiquitinated. Ubiquitination leads to its degradation through the 26S proteasome. Ubiquitin-proteasome-mediated DNAI7 degradation occurs in mitosis.

It is found in the cell projection. The protein localises to the cilium. The protein resides in the cytoplasm. Via its association with the multisubunit axonemal dynein complex, is potentially involved in the regulation of cilia function. May act as a cell cycle regulator. The polypeptide is Dynein axonemal intermediate chain 7 (Macaca fascicularis (Crab-eating macaque)).